The following is a 369-amino-acid chain: Biotin synthase (369 aa).

A Radical SAM core domain is found at 51–269; that stretch reads NYVQVSTLLS…IAVARIMMPK (219 aa). Residues Cys66, Cys70, and Cys73 each coordinate [4Fe-4S] cluster. Cys110, Cys141, Cys201, and Arg273 together coordinate [2Fe-2S] cluster.

It belongs to the radical SAM superfamily. Biotin synthase family. In terms of assembly, homodimer. Requires [4Fe-4S] cluster as cofactor. [2Fe-2S] cluster is required as a cofactor.

The catalysed reaction is (4R,5S)-dethiobiotin + (sulfur carrier)-SH + 2 reduced [2Fe-2S]-[ferredoxin] + 2 S-adenosyl-L-methionine = (sulfur carrier)-H + biotin + 2 5'-deoxyadenosine + 2 L-methionine + 2 oxidized [2Fe-2S]-[ferredoxin]. The protein operates within cofactor biosynthesis; biotin biosynthesis; biotin from 7,8-diaminononanoate: step 2/2. Functionally, catalyzes the conversion of dethiobiotin (DTB) to biotin by the insertion of a sulfur atom into dethiobiotin via a radical-based mechanism. The polypeptide is Biotin synthase (Pseudoalteromonas atlantica (strain T6c / ATCC BAA-1087)).